The chain runs to 393 residues: SEC12-like protein 2 (393 aa).

Alanine 2 carries the post-translational modification N-acetylalanine. At 2-367 (ANQSTETNQP…EQKGDKPGVR (366 aa)) the chain is on the cytoplasmic side. The segment at 41–67 (EKSEDDDESSSSSSSSRSCIVLSGGGG) is disordered. Serine 43 is modified (phosphoserine). WD repeat units lie at residues 151-190 (RDVG…TLLN), 193-231 (QAHS…AVAS), 283-322 (IKKN…TIQV), and 326-367 (AHLG…PGVR). A helical; Signal-anchor for type II membrane protein transmembrane segment spans residues 368–388 (WWLLVLLIVLLYVVAYYYMKA). Residues 389-393 (KGIIP) are Lumenal-facing.

Interacts with BZIP28.

The protein localises to the endoplasmic reticulum membrane. Its subcellular location is the golgi apparatus. It localises to the cis-Golgi network membrane. Its function is as follows. Required for the formation or budding of transport vesicles from the ER. The protein is SEC12-like protein 2 (STL2P) of Arabidopsis thaliana (Mouse-ear cress).